We begin with the raw amino-acid sequence, 763 residues long: Glycerophosphodiester phosphodiesterase GDPDL1 (763 aa).

Residues 1-35 (MNSRPSNPTKLVIRSSTLLFCGVVLIHLFAAQIDA) form the signal peptide. At 36 to 744 (QRSTSRWQTL…STIAQAPSGQ (709 aa)) the chain is on the extracellular side. Residues 50–350 (PLVIARGGFS…DFPITASAAV (301 aa)) form the GP-PDE 1 domain. N-linked (GlcNAc...) asparagine glycosylation is found at N105, N192, N248, N257, N315, N359, N430, N534, N547, and N654. One can recognise a GP-PDE 2 domain in the interval 366 to 668 (FLVISKDGAS…EFPFTAARYK (303 aa)). A helical transmembrane segment spans residues 745-762 (TRLKLSLLLSVFFLSLLL). Residue L763 is a topological domain, cytoplasmic.

It belongs to the glycerophosphoryl diester phosphodiesterase family. Requires Ca(2+) as cofactor. As to expression, expressed in rosette and cauline leaves, stems, flowers and siliques.

The protein resides in the cell membrane. It catalyses the reaction a sn-glycero-3-phosphodiester + H2O = an alcohol + sn-glycerol 3-phosphate + H(+). Its function is as follows. Hydrolyzes glycerolphosphoglycerol, glycerophosphocholine and glycerophosphoethanolamine in vitro. The polypeptide is Glycerophosphodiester phosphodiesterase GDPDL1 (Arabidopsis thaliana (Mouse-ear cress)).